Reading from the N-terminus, the 106-residue chain is Iron-sulfur cluster assembly protein CyaY (106 aa).

It belongs to the frataxin family.

Functionally, involved in iron-sulfur (Fe-S) cluster assembly. May act as a regulator of Fe-S biogenesis. The polypeptide is Iron-sulfur cluster assembly protein CyaY (Pectobacterium atrosepticum (strain SCRI 1043 / ATCC BAA-672) (Erwinia carotovora subsp. atroseptica)).